A 482-amino-acid chain; its full sequence is Putative alpha-L-fucosidase (482 aa).

Positions 1-16 (MIFLIFSILFLHLANC) are cleaved as a signal peptide. Asn-182, Asn-343, Asn-359, and Asn-419 each carry an N-linked (GlcNAc...) asparagine glycan.

Belongs to the glycosyl hydrolase 29 family.

The enzyme catalyses an alpha-L-fucoside + H2O = L-fucose + an alcohol. Functionally, alpha-L-fucosidase is responsible for hydrolyzing the alpha-1,6-linked fucose joined to the reducing-end N-acetylglucosamine of the carbohydrate moieties of glycoproteins. This Caenorhabditis elegans protein is Putative alpha-L-fucosidase.